The following is a 112-amino-acid chain: uncharacterized protein (112 aa).

Residues 5-112 (IFQKIIKGII…LLGGKKLNKI (108 aa)) form the HIT domain. Residues 98–102 (HLHLH) carry the Histidine triad motif motif.

This is an uncharacterized protein from Buchnera aphidicola subsp. Baizongia pistaciae (strain Bp).